Consider the following 279-residue polypeptide: Undecaprenyl-diphosphatase (279 aa).

The next 8 membrane-spanning stretches (helical) occupy residues 2–22 (LIIELLKAIFFGIIEGITEWL), 44–64 (AFIEMFNIVIQLGAIIAVMLI), 85–105 (WQLWLKVVIACIPSILIAVPL), 113–133 (FYFMVPIAIALIVYGIAFIWI), 163–183 (VLSIVPGTSRSGATILGAIIL), 188–208 (TVAADFTFFLAIPTMFGYSGL), 223–243 (AQVLILLVASLTAFVVSLLAI), and 255–275 (FTIFGKYRIVLGSLLLIYSFF).

It belongs to the UppP family.

Its subcellular location is the cell membrane. It catalyses the reaction di-trans,octa-cis-undecaprenyl diphosphate + H2O = di-trans,octa-cis-undecaprenyl phosphate + phosphate + H(+). Its function is as follows. Catalyzes the dephosphorylation of undecaprenyl diphosphate (UPP). Confers resistance to bacitracin. In Streptococcus pyogenes serotype M28 (strain MGAS6180), this protein is Undecaprenyl-diphosphatase.